The following is a 54-amino-acid chain: Synaptosomal-associated protein 25 (54 aa).

This sequence belongs to the SNAP-25 family. As to quaternary structure, part of the SNARE core complex containing SNAP25, VAMP2 and STX1A; this complex binds CPLX1. Found in a complex containing SYT1, SV2B and syntaxin-1. Found in a ternary complex with STX1A and VAMP8. Interacts with HSC70 and with SYT9, forming a complex with DNAJC5. The interaction with SYT9 is inhibited in presence of calcium. Isoform 1 and isoform 2 interact with BLOC1S6. Interacts with CENPF. Interacts with EQTN. Interacts with HGS. Interacts with KCNB1 (via N-terminus); reduces the voltage-dependent potassium channel KCNB1 activity in pancreatic beta cells. Interacts with OTOF. Interacts with RIMS1. Interacts with SNAPIN. Interacts with STXBP6. Interacts with TRIM9. Interacts with ZDHHC13 (via ANK repeats). Interacts with ZDHHC17 (via ANK repeats). Associates with the BLOC-1 complex. Interacts with PLCL1 (via C2 domain). Interacts with PRRT2; this interaction may impair the formation of the SNARE complex. Interacts with alpha-synuclein/SNCA. Interacts with PRPH2. Interacts with ROM1. Interacts with STX3. Post-translationally, the N-terminus is blocked.

Its subcellular location is the cytoplasm. The protein resides in the perinuclear region. It localises to the cell membrane. It is found in the synapse. The protein localises to the synaptosome. Its subcellular location is the photoreceptor inner segment. Its function is as follows. t-SNARE involved in the molecular regulation of neurotransmitter release. May play an important role in the synaptic function of specific neuronal systems. Associates with proteins involved in vesicle docking and membrane fusion. Regulates plasma membrane recycling through its interaction with CENPF. Modulates the gating characteristics of the delayed rectifier voltage-dependent potassium channel KCNB1 in pancreatic beta cells. The protein is Synaptosomal-associated protein 25 (SNAP25) of Oryctolagus cuniculus (Rabbit).